The following is a 125-amino-acid chain: Fluoride-specific ion channel FluC (125 aa).

A run of 4 helical transmembrane segments spans residues 1-21, 32-52, 68-88, and 101-121; these read MIQA…RYYV, AFPW…GVFA, LLIT…LDAI, and IYIA…LAVM. Residues glycine 75 and threonine 78 each contribute to the Na(+) site.

The protein belongs to the fluoride channel Fluc/FEX (TC 1.A.43) family.

Its subcellular location is the cell inner membrane. It catalyses the reaction fluoride(in) = fluoride(out). Na(+) is not transported, but it plays an essential structural role and its presence is essential for fluoride channel function. In terms of biological role, fluoride-specific ion channel. Important for reducing fluoride concentration in the cell, thus reducing its toxicity. The sequence is that of Fluoride-specific ion channel FluC from Rhizobium johnstonii (strain DSM 114642 / LMG 32736 / 3841) (Rhizobium leguminosarum bv. viciae).